The primary structure comprises 1132 residues: Telomerase reverse transcriptase (1132 aa).

Residues 1-66 (MSAKKPVQSK…NQNNANSGGN (66 aa)) are disordered. Composition is skewed to polar residues over residues 9 to 26 (SKLN…NRST) and 45 to 55 (QSQNTTTGAFR). The 355-residue stretch at 602-956 (KEMRIFCESQ…DLFHWIGISI (355 aa)) folds into the Reverse transcriptase domain. The Mg(2+) site is built by Asp-708, Asp-886, and Asp-887.

Belongs to the reverse transcriptase family. Telomerase subfamily.

Its subcellular location is the nucleus. It localises to the chromosome. It is found in the telomere. The catalysed reaction is DNA(n) + a 2'-deoxyribonucleoside 5'-triphosphate = DNA(n+1) + diphosphate. In terms of biological role, telomerase is a ribonucleoprotein enzyme essential for the replication of chromosome termini in most eukaryotes. It elongates telomeres. It is a reverse transcriptase that adds simple sequence repeats to chromosome ends by copying a template sequence within the RNA component of the enzyme. This is Telomerase reverse transcriptase (TERT) from Oxytricha trifallax (Sterkiella histriomuscorum).